A 221-amino-acid chain; its full sequence is Hypoxanthine-guanine phosphoribosyltransferase (221 aa).

S2 bears the N-acetylserine mark. Residues K85, 110-118, K159, and 188-194 each bind GMP; these read DEVDDTRTT and WYAYPWE. D114 acts as the Proton acceptor in catalysis.

This sequence belongs to the purine/pyrimidine phosphoribosyltransferase family. As to quaternary structure, dimer. Mg(2+) is required as a cofactor.

It is found in the cytoplasm. Its subcellular location is the nucleus. It catalyses the reaction IMP + diphosphate = hypoxanthine + 5-phospho-alpha-D-ribose 1-diphosphate. The catalysed reaction is GMP + diphosphate = guanine + 5-phospho-alpha-D-ribose 1-diphosphate. Its pathway is purine metabolism; IMP biosynthesis via salvage pathway; IMP from hypoxanthine: step 1/1. Its activity is regulated as follows. Subject to feedback inhibition by GMP. Converts guanine to guanosine monophosphate, and hypoxanthine to inosine monophosphate. Transfers the 5-phosphoribosyl group from 5-phosphoribosylpyrophosphate onto the purine. Plays a central role in the generation of purine nucleotides through the purine salvage pathway. This Saccharomyces cerevisiae (strain ATCC 204508 / S288c) (Baker's yeast) protein is Hypoxanthine-guanine phosphoribosyltransferase (HPT1).